Reading from the N-terminus, the 180-residue chain is Ribosome maturation factor RimM (180 aa).

In terms of domain architecture, PRC barrel spans 99–172; it reads EDEFYQVDLI…FLVVDPVAAG (74 aa).

Belongs to the RimM family. In terms of assembly, binds ribosomal protein uS19.

It localises to the cytoplasm. In terms of biological role, an accessory protein needed during the final step in the assembly of 30S ribosomal subunit, possibly for assembly of the head region. Essential for efficient processing of 16S rRNA. May be needed both before and after RbfA during the maturation of 16S rRNA. It has affinity for free ribosomal 30S subunits but not for 70S ribosomes. The sequence is that of Ribosome maturation factor RimM from Bartonella henselae (strain ATCC 49882 / DSM 28221 / CCUG 30454 / Houston 1) (Rochalimaea henselae).